We begin with the raw amino-acid sequence, 1067 residues long: Eukaryotic translation initiation factor 3 subunit A (1067 aa).

Residues 92-121 (LKKFIELAEKKVTEAQAKADEIQSSLESAA) are a coiled coil. In terms of domain architecture, PCI spans 339–523 (MTKAASFVLL…GVLTFDTDIF (185 aa)). Positions 608–899 (RVLIEKKKEA…QKQREEEAEA (292 aa)) form a coiled coil. 4 stretches are compositionally biased toward basic and acidic residues: residues 617–632 (AATD…EETR), 642–665 (EAEK…DEQD), 795–901 (EVSE…EARR), and 916–926 (AEPERPAERTA). 2 disordered regions span residues 617–665 (AATD…DEQD) and 795–1067 (EVSE…QQQQ). 2 stretches are compositionally biased toward low complexity: residues 965–976 (AAPAAAPAPAAE) and 1025–1046 (SSSS…AASS).

It belongs to the eIF-3 subunit A family. In terms of assembly, component of the eukaryotic translation initiation factor 3 (eIF-3) complex.

The protein localises to the cytoplasm. Functionally, RNA-binding component of the eukaryotic translation initiation factor 3 (eIF-3) complex, which is involved in protein synthesis of a specialized repertoire of mRNAs and, together with other initiation factors, stimulates binding of mRNA and methionyl-tRNAi to the 40S ribosome. The eIF-3 complex specifically targets and initiates translation of a subset of mRNAs involved in cell proliferation. In Neosartorya fischeri (strain ATCC 1020 / DSM 3700 / CBS 544.65 / FGSC A1164 / JCM 1740 / NRRL 181 / WB 181) (Aspergillus fischerianus), this protein is Eukaryotic translation initiation factor 3 subunit A (tif32).